The sequence spans 813 residues: Nuclear pore complex protein 5 (813 aa).

The protein belongs to the nucleoporin Nup84/Nup107 family. In terms of assembly, part of the nuclear pore complex (NPC). May interact with mdf-1.

It is found in the nucleus. It localises to the nuclear pore complex. Its subcellular location is the chromosome. The protein localises to the centromere. The protein resides in the kinetochore. It is found in the nucleus membrane. Its function is as follows. Involved in kinetochore assembly and chromosome segregation during embryonic mitosis. Required for the localization of the NDC80 complex member him-10, the chromosomal passenger complex component air-2 and nuclear pore complex proteins npp-23 and npp-15 to kinetochores during metaphase. Required for npp-23 localization to the nuclear envelope during interphase. Recruits mdf-1, a component of the spindle assembly checkpoint, to the nuclear envelope. Appears dispensable for the assembly of the nuclear pore complex and for nuclear protein import. This chain is Nuclear pore complex protein 5, found in Caenorhabditis elegans.